We begin with the raw amino-acid sequence, 622 residues long: Polypeptide N-acetylgalactosaminyltransferase 6 (622 aa).

Over 1-8 the chain is Cytoplasmic; the sequence is MRLLRRRH. A helical; Signal-anchor for type II membrane protein transmembrane segment spans residues 9–28; it reads MPLRLAMVGCAFVLFLFLLH. Over 29–622 the chain is Lumenal; that stretch reads RDVSSREEAT…SDPHQLWLFV (594 aa). An N-linked (GlcNAc...) asparagine glycan is attached at asparagine 86. Cystine bridges form between cysteine 165-cysteine 402 and cysteine 393-cysteine 474. The interval 176-285 is catalytic subdomain A; that stretch reads LATTSVIIVF…HGWLEPLLAR (110 aa). 3 residues coordinate Mn(2+): aspartate 269, histidine 271, and histidine 407. Positions 348 to 410 are catalytic subdomain B; it reads PIKSPTFAGG…PCSVVGHVFR (63 aa). Asparagine 476 carries N-linked (GlcNAc...) asparagine glycosylation. In terms of domain architecture, Ricin B-type lectin spans 506-622; the sequence is TNQCLDVGEN…SDPHQLWLFV (117 aa). Residues cysteine 509 and cysteine 527 are joined by a disulfide bond. UDP-N-acetyl-alpha-D-galactosamine is bound by residues aspartate 511, glutamate 514, histidine 528, and asparagine 533. 2 disulfide bridges follow: cysteine 553-cysteine 566 and cysteine 597-cysteine 610.

This sequence belongs to the glycosyltransferase 2 family. GalNAc-T subfamily. Requires Mn(2+) as cofactor. In terms of tissue distribution, expressed in placenta and trachea. Weakly expressed in brain and pancreas. Expressed in fibroblast. Weakly or not expressed in lung, liver, muscle, kidney, spleen, thymus, prostate, testis, ovary, intestine, colon, leukocyte, stomach, thyroid, spinal cord, lymph node, trachea, adrenal gland and bone marrow.

The protein resides in the golgi apparatus membrane. The catalysed reaction is L-seryl-[protein] + UDP-N-acetyl-alpha-D-galactosamine = a 3-O-[N-acetyl-alpha-D-galactosaminyl]-L-seryl-[protein] + UDP + H(+). It catalyses the reaction L-threonyl-[protein] + UDP-N-acetyl-alpha-D-galactosamine = a 3-O-[N-acetyl-alpha-D-galactosaminyl]-L-threonyl-[protein] + UDP + H(+). The protein operates within protein modification; protein glycosylation. In terms of biological role, catalyzes the initial reaction in O-linked oligosaccharide biosynthesis, the transfer of an N-acetyl-D-galactosamine residue to a serine or threonine residue on the protein receptor. May participate in synthesis of oncofetal fibronectin. Has activity toward MUC1A, MUC2, EA2 and fibronectin peptides. Glycosylates FGF23. The polypeptide is Polypeptide N-acetylgalactosaminyltransferase 6 (GALNT6) (Homo sapiens (Human)).